The following is a 399-amino-acid chain: Glutamine synthetase 1, mitochondrial (399 aa).

Residues 1–27 (MALRVAGLFLKKELVAPATQQLRLLRT) constitute a mitochondrion transit peptide. Positions 62–143 (VQATYLWIDG…VLCDTYSADG (82 aa)) constitute a GS beta-grasp domain. The region spanning 150-399 (KRAAFQAAID…AIVRTCLLNE (250 aa)) is the GS catalytic domain.

The protein belongs to the glutamine synthetase family. Homooctamer.

It is found in the mitochondrion. It carries out the reaction L-glutamate + NH4(+) + ATP = L-glutamine + ADP + phosphate + H(+). The sequence is that of Glutamine synthetase 1, mitochondrial (Gs1) from Drosophila melanogaster (Fruit fly).